The primary structure comprises 372 residues: NAD(P)H-quinone oxidoreductase subunit 1 (372 aa).

The next 8 helical transmembrane spans lie at 31 to 51 (PLPM…VVWL), 65 to 85 (PEFI…KLVL), 97 to 117 (LLFT…YLIL), 128 to 148 (VGLG…GLLM), 176 to 196 (LALS…VDIV), 254 to 276 (FALF…AVLY), 304 to 324 (LIFA…LIFL), and 347 to 367 (FLLP…LAFP).

The protein belongs to the complex I subunit 1 family. As to quaternary structure, NDH-1 is composed of at least 11 different subunits.

It is found in the cellular thylakoid membrane. It carries out the reaction a plastoquinone + NADH + (n+1) H(+)(in) = a plastoquinol + NAD(+) + n H(+)(out). It catalyses the reaction a plastoquinone + NADPH + (n+1) H(+)(in) = a plastoquinol + NADP(+) + n H(+)(out). Its function is as follows. NDH-1 shuttles electrons from an unknown electron donor, via FMN and iron-sulfur (Fe-S) centers, to quinones in the respiratory and/or the photosynthetic chain. The immediate electron acceptor for the enzyme in this species is believed to be plastoquinone. Couples the redox reaction to proton translocation, and thus conserves the redox energy in a proton gradient. In Leptolyngbya boryana (Plectonema boryanum), this protein is NAD(P)H-quinone oxidoreductase subunit 1.